We begin with the raw amino-acid sequence, 449 residues long: Ribosomal protein uS12 methylthiotransferase RimO (449 aa).

The MTTase N-terminal domain maps to 16-126 (PKISFVSLGC…VMEAVHAAIA (111 aa)). 6 residues coordinate [4Fe-4S] cluster: Cys25, Cys61, Cys90, Cys157, Cys161, and Cys164. One can recognise a Radical SAM core domain in the interval 143-381 (LTPRHYAYLK…MEHQQKISAR (239 aa)). Residues 384 to 449 (REKIGKHVSV…DAYDLHGKAV (66 aa)) enclose the TRAM domain.

Belongs to the methylthiotransferase family. RimO subfamily. Requires [4Fe-4S] cluster as cofactor.

It localises to the cytoplasm. The enzyme catalyses L-aspartate(89)-[ribosomal protein uS12]-hydrogen + (sulfur carrier)-SH + AH2 + 2 S-adenosyl-L-methionine = 3-methylsulfanyl-L-aspartate(89)-[ribosomal protein uS12]-hydrogen + (sulfur carrier)-H + 5'-deoxyadenosine + L-methionine + A + S-adenosyl-L-homocysteine + 2 H(+). Catalyzes the methylthiolation of an aspartic acid residue of ribosomal protein uS12. This is Ribosomal protein uS12 methylthiotransferase RimO from Beijerinckia indica subsp. indica (strain ATCC 9039 / DSM 1715 / NCIMB 8712).